Here is a 237-residue protein sequence, read N- to C-terminus: uncharacterized protein (237 aa).

The tat-type signal signal peptide spans 1–25 (MRHIFQRLLPRRLWLAGLPCLALLG). The interval 201–237 (IERQLSTRKPAGNFSPDTPHESEKPAPSTHEVTPDEP) is disordered.

Exported by the Tat system. The position of the signal peptide cleavage has not been experimentally proven. Can also be exported by the Sec system.

This is an uncharacterized protein from Escherichia coli (strain K12).